The sequence spans 1436 residues: Probable deoxyribonuclease RhsB (1436 aa).

A disordered region spans residues 16 to 42 (HAGNRPNPPADRPQPCQGKPPTSPGKT). 2 consecutive transmembrane segments (helical) span residues 48-68 (FLGA…VAAA) and 70-90 (VFLV…LAVF). 5 YD repeats span residues 486 to 521 (YNTA…CADG), 569 to 605 (YDEV…DGSG), 612 to 647 (YDDA…GPDA), 766 to 799 (DLLT…PDGS), and 847 to 879 (YDAR…VSSA).

It belongs to the RHS/WapA nuclease family.

Its subcellular location is the membrane. Its function is as follows. Toxic component of a toxin-immunity protein module, which functions as a cellular contact-dependent growth inhibition (CDI) system. This protein may be a nuclease that is specifically inhibited by its cognate immunity protein RhsBI. Upon expression of the C-terminus (residues 1284-1436) in E.coli growth is inhibited, cells elongate, nucleoids condense and plasmid DNA is degraded; these effects are blocked specifically by cognate immunity protein RshIB. Cell contact is necessary for growth inhibition. This Dickeya dadantii (strain 3937) (Erwinia chrysanthemi (strain 3937)) protein is Probable deoxyribonuclease RhsB (rhsB).